Consider the following 267-residue polypeptide: MVVWVGTSFKMNKTLEEALAFARRLADADLERDPRVQRFVIPSFTAVREVKRVLTESSVKVGAQNMHWEDAGAWTGEISPLMLKDCRLDLVELGHSERREHFGETDETVGLKAAAAIRHGLTPLICIGETLQERNEGRADAVLRRQVEAALRGVDTEAGEAPILLAYEPVWAIGVNGIPATADYASERHRGIAEVAKSILGRPVPVLYGGSVNPGNCEELIGQPDIDGLFIGRSAWSVEGYLDILARVSAAIDRSSPRQTASERKLP.

Residue His95 is the Electrophile of the active site. Glu168 acts as the Proton acceptor in catalysis. Residues Gly174 and Ser211 each contribute to the substrate site.

It belongs to the triosephosphate isomerase family. In terms of assembly, homodimer.

It localises to the cytoplasm. It carries out the reaction L-erythrulose 1-phosphate = D-erythrulose 4-phosphate. It functions in the pathway carbohydrate metabolism; erythritol degradation. In terms of biological role, catalyzes the isomerization of D-erythrulose-4P to L-erythrulose-1P. This chain is L-erythrulose-1-phosphate isomerase, found in Rhizobium etli (strain ATCC 51251 / DSM 11541 / JCM 21823 / NBRC 15573 / CFN 42).